Here is a 301-residue protein sequence, read N- to C-terminus: Ribonuclease Z (301 aa).

Positions 61, 63, 65, 66, 140, 211, and 269 each coordinate Zn(2+). D65 serves as the catalytic Proton acceptor.

The protein belongs to the RNase Z family. As to quaternary structure, homodimer. Zn(2+) is required as a cofactor.

It carries out the reaction Endonucleolytic cleavage of RNA, removing extra 3' nucleotides from tRNA precursor, generating 3' termini of tRNAs. A 3'-hydroxy group is left at the tRNA terminus and a 5'-phosphoryl group is left at the trailer molecule.. Functionally, zinc phosphodiesterase, which displays some tRNA 3'-processing endonuclease activity. Probably involved in tRNA maturation, by removing a 3'-trailer from precursor tRNA. This chain is Ribonuclease Z, found in Bradyrhizobium diazoefficiens (strain JCM 10833 / BCRC 13528 / IAM 13628 / NBRC 14792 / USDA 110).